The primary structure comprises 39 residues: Potassium channel toxin alpha-KTx 2.5 (39 aa).

3 disulfides stabilise this stretch: C7–C29, C13–C34, and C17–C36.

Belongs to the short scorpion toxin superfamily. Potassium channel inhibitor family. Alpha-KTx 02 subfamily. As to expression, expressed by the venom gland.

It is found in the secreted. Functionally, potent selective inhibitor of Kv1.1/KCNA1, Kv1.2/KCNA2, Kv1.3/KCNA3 voltage-gated potassium channels. Weak inhibitor of Kv1.6/KCNA6 potassium channel. It also shows a weak interaction with nicotinic acetylcholine receptors (nAChR), suggesting it may weakly inhibit it. This Centruroides limbatus (Bark scorpion) protein is Potassium channel toxin alpha-KTx 2.5.